Here is a 512-residue protein sequence, read N- to C-terminus: Sodium/proline symporter (512 aa).

13 consecutive transmembrane segments (helical) span residues 16-36, 54-74, 85-105, 139-159, 174-194, 200-220, 240-260, 286-306, 327-347, 381-401, 410-430, 438-458, and 467-487; these read WQTY…GFYG, IGPY…WMIM, LSAM…YFVV, IISG…GFVS, FGLI…GYLA, FFQG…AMMN, LFKG…LGYF, ISWM…GIAF, VLFH…AIMS, FVMI…AIAW, LVGN…LFAL, AGAV…IAWI, and IFGL…TYVV.

This sequence belongs to the sodium:solute symporter (SSF) (TC 2.A.21) family.

The protein resides in the cell membrane. It carries out the reaction L-proline(in) + Na(+)(in) = L-proline(out) + Na(+)(out). Its function is as follows. Catalyzes the sodium-dependent uptake of extracellular L-proline. Since most S.aureus strains are L-proline auxotrophs, this transporter may aid the bacterial persistence during an infection of tissues with low proline concentrations. The polypeptide is Sodium/proline symporter (putP) (Staphylococcus aureus (strain Mu3 / ATCC 700698)).